The sequence spans 150 residues: UPF0178 protein Shewana3_1627 (150 aa).

Belongs to the UPF0178 family.

The sequence is that of UPF0178 protein Shewana3_1627 from Shewanella sp. (strain ANA-3).